The primary structure comprises 628 residues: Putative pentatricopeptide repeat-containing protein At3g13770, mitochondrial (628 aa).

The transit peptide at 1–19 directs the protein to the mitochondrion; it reads MFNLMRLIHRSFSSSPTNY. 11 PPR repeats span residues 51-85, 86-116, 117-151, 152-186, 187-217, 218-252, 253-287, 288-318, 319-353, 355-389, and 392-422; these read GFHGYDALLNACLDKRALRDGQRVHAHMIKTRYLP, ATYLRTRLLIFYGKCDCLEDARKVLDEMPEK, NVVSWTAMISRYSQTGHSSEALTVFAEMMRSDGKP, NEFTFATVLTSCIRASGLGLGKQIHGLIVKWNYDS, HIFVGSSLLDMYAKAGQIKEAREIFECLPER, DVVSCTAIIAGYAQLGLDEEALEMFHRLHSEGMSP, NYVTYASLLTALSGLALLDHGKQAHCHVLRRELPF, YAVLQNSLIDMYSKCGNLSYARRLFDNMPER, TAISWNAMLVGYSKHGLGREVLELFRLMRDEKRVK, DAVTLLAVLSGCSHGRMEDTGLNIFDGMVAGEYGT, and GTEHYGCIVDMLGRAGRIDEAFEFIKRMPSK. The interval 427–502 is type E motif; the sequence is VLGSLLGACR…EPGRSWIQHE (76 aa). Residues 503–533 are type E(+) motif; that stretch reads QTLHYFHANDRTHPRREEVLAKMKEISIKMK. The tract at residues 534-628 is type DYW motif; sequence QAGYVPDLSC…DGICSCGDYW (95 aa).

It belongs to the PPR family. PCMP-H subfamily.

The protein resides in the mitochondrion. The sequence is that of Putative pentatricopeptide repeat-containing protein At3g13770, mitochondrial (PCMP-H85) from Arabidopsis thaliana (Mouse-ear cress).